We begin with the raw amino-acid sequence, 500 residues long: Cytochrome P450 71D13 (500 aa).

The helical; Signal-anchor for type II membrane protein transmembrane segment at 3–23 (LQISSAIIILVVTYTISLLII) threads the bilayer. C439 is a binding site for heme.

The protein belongs to the cytochrome P450 family. Heme is required as a cofactor.

The protein localises to the endoplasmic reticulum membrane. It catalyses the reaction (4S)-limonene + reduced [NADPH--hemoprotein reductase] + O2 = (1S,6R)-isopiperitenol + oxidized [NADPH--hemoprotein reductase] + H2O + H(+). Its function is as follows. Hydroxylates (-)-(4S)-limonene to (-)-trans-isopiperitenol, a precursor of (-)-menthol, responsible for the cooling sensation of peppermint. This Mentha piperita (Peppermint) protein is Cytochrome P450 71D13 (CYP71D13).